The chain runs to 353 residues: Uroporphyrinogen decarboxylase (353 aa).

Residues arginine 33–arginine 37, aspartate 82, tyrosine 158, serine 213, and histidine 332 contribute to the substrate site.

The protein belongs to the uroporphyrinogen decarboxylase family. Homodimer.

Its subcellular location is the cytoplasm. The enzyme catalyses uroporphyrinogen III + 4 H(+) = coproporphyrinogen III + 4 CO2. It functions in the pathway porphyrin-containing compound metabolism; protoporphyrin-IX biosynthesis; coproporphyrinogen-III from 5-aminolevulinate: step 4/4. Its function is as follows. Catalyzes the decarboxylation of four acetate groups of uroporphyrinogen-III to yield coproporphyrinogen-III. This is Uroporphyrinogen decarboxylase from Gluconobacter oxydans (strain 621H) (Gluconobacter suboxydans).